The sequence spans 239 residues: EF-hand domain-containing protein D1 (239 aa).

Residues M1–E18 are compositionally biased toward basic and acidic residues. The tract at residues M1–A53 is disordered. 2 consecutive EF-hand domains span residues R90 to P125 and Q126 to G161. Positions 103, 107, 114, 139, 141, 143, 145, and 150 each coordinate Ca(2+). A Phosphoserine modification is found at S201.

It is found in the mitochondrion inner membrane. In terms of biological role, acts as a calcium sensor for mitochondrial flash (mitoflash) activation, an event characterized by stochastic bursts of superoxide production. May play a role in neuronal differentiation. This Homo sapiens (Human) protein is EF-hand domain-containing protein D1 (EFHD1).